The chain runs to 946 residues: MNEFLPDSCLLGVMLAVSSHSGPQVIYHYPPSNRILETARDAHMNQQLGTTGLKRETEGRSMKSRGHPGNWDMNSELDSDLHSSKMERTASSSSSSSLSSPSSGLSDSELSTDYADWSTSGSSSDSELDLQTPDDSRRSQLENAGARSTRNVSPVSMSRNTSLGREPKDNGQKISASKLLDILNDPKSQFTKINTNDTNDDQFNMEEDDDLIEFDYMTSEKRVDITEEFFTEANYQDTSKFFEFDIDFLAELCCPSREMCNTRFELTVDEYCFLGHPIHVDSSGNWRKSRKRNNSLSKSKRSGSLTGSRKRSGSKSSNHDKSFSAETPNSPESSKIIEEVGSLHKSRTLSNPQNDHFTKDMTMFHVCFIMDPNLIEYNKRVDDMYQYVVARLSVLLRYLQSKNDYVSEQCELILKEKEKVFKNSKHYKSLSLPSEKGRYLYQRLLAKSSLARALTECVEKIKKNEIACLEITDHRTVSLQIPIQNEFSILPQYKLYPVLKGSFLTSIQNNKFLEKSANIDDNHHAKSARDTNLISDHVNTFSNGQTKNEIFYSKNMENALTAQNDYDDDDLLLYSILLLDDPDKIIADLDNYSSNDDIGGVILKQLVKVIQPNVPLLSYQYIINELLAEKPLSSSTTANKSKQNKDNKTNTFYSALLRSCALHLIYWRHARAILPISFKNTYIVSPLSPVEADNSEMIKGNRKPSITDLNVTSNSSSKIPVIYLNQQSFKLKFPSLPSLPTFLNILSLGKPKAFGNIIPSKEHKPIYMAALIWLIQKGYLTQLLTFVYIRVDKKIKMKVDEDLEKEGFRTNRRRRQEDNVDNKLLSTDENANEPPKSTKVDINDNTLEGRDTEYDSDSFDYDDPEFNHDYTIILEPERATALEKRWIYKCIQDQPQDIKILFNKVMKYMNGRTAMETVMLKEHISRHDIKRLLTSLGNYIVELNHW.

The N-terminal stretch at 1-21 is a signal peptide; that stretch reads MNEFLPDSCLLGVMLAVSSHS. Disordered regions lie at residues 48-171, 283-334, and 813-849; these read LGTT…KDNG, SGNW…PESS, and RRRQ…TLEG. The span at 79–88 shows a compositional bias: basic and acidic residues; that stretch reads SDLHSSKMER. A compositionally biased stretch (low complexity) spans 91–125; that stretch reads SSSSSSSLSSPSSGLSDSELSTDYADWSTSGSSSD. Positions 146–163 are enriched in polar residues; sequence ARSTRNVSPVSMSRNTSL. Residues 287–301 are compositionally biased toward basic residues; the sequence is RKSRKRNNSLSKSKR. A compositionally biased stretch (polar residues) spans 324–333; that stretch reads SAETPNSPES. The segment covering 836–849 has biased composition (basic and acidic residues); that stretch reads KSTKVDINDNTLEG.

It belongs to the NPR3 family.

Its function is as follows. Mediates inactivation of the TORC1 complex in response to amino acid starvation. Required for meiotic nuclear division. The polypeptide is Nitrogen permease regulator 3 (NPR3) (Candida glabrata (strain ATCC 2001 / BCRC 20586 / JCM 3761 / NBRC 0622 / NRRL Y-65 / CBS 138) (Yeast)).